The following is a 161-amino-acid chain: Mediator of RNA polymerase II transcription subunit 10 (161 aa).

This sequence belongs to the Mediator complex subunit 10 family. Component of the Mediator complex.

Its subcellular location is the nucleus. In terms of biological role, component of the Mediator complex, a coactivator involved in the regulated transcription of nearly all RNA polymerase II-dependent genes. Mediator functions as a bridge to convey information from gene-specific regulatory proteins to the basal RNA polymerase II transcription machinery. Mediator is recruited to promoters by direct interactions with regulatory proteins and serves as a scaffold for the assembly of a functional preinitiation complex with RNA polymerase II and the general transcription factors. The protein is Mediator of RNA polymerase II transcription subunit 10 (NUT2) of Kluyveromyces lactis (strain ATCC 8585 / CBS 2359 / DSM 70799 / NBRC 1267 / NRRL Y-1140 / WM37) (Yeast).